We begin with the raw amino-acid sequence, 120 residues long: Large ribosomal subunit protein bL21 (120 aa).

This sequence belongs to the bacterial ribosomal protein bL21 family. Part of the 50S ribosomal subunit. Contacts protein L20.

In terms of biological role, this protein binds to 23S rRNA in the presence of protein L20. This Roseiflexus sp. (strain RS-1) protein is Large ribosomal subunit protein bL21.